Reading from the N-terminus, the 202-residue chain is Probable nicotinate-nucleotide adenylyltransferase (202 aa).

This sequence belongs to the NadD family.

The catalysed reaction is nicotinate beta-D-ribonucleotide + ATP + H(+) = deamido-NAD(+) + diphosphate. The protein operates within cofactor biosynthesis; NAD(+) biosynthesis; deamido-NAD(+) from nicotinate D-ribonucleotide: step 1/1. Functionally, catalyzes the reversible adenylation of nicotinate mononucleotide (NaMN) to nicotinic acid adenine dinucleotide (NaAD). The polypeptide is Probable nicotinate-nucleotide adenylyltransferase (Clostridium perfringens (strain ATCC 13124 / DSM 756 / JCM 1290 / NCIMB 6125 / NCTC 8237 / Type A)).